The following is a 331-amino-acid chain: MKQTVYTASPESQQIHVWSLNHEGTLTLVQVVDVPGQVQPMVVSPDKRYLYVGVRPEFRVLAYRIAPDDGALTFAAESALPGSPTHISTDHHGRFVFVGSYNAGNVSVTRLQDGLPVELVDVVEGLDGCHSANITPDNRTLWVPALKQDRICLFTLSDDGHLVAQEPAEVNTVEGAGPRHMVFHPNRQYAYCVNELNSSVDVWQLKNPHGEIECVQTLDMMPADFSDTRWAADIHITPDGRHLYACDRTASLITVFSVSEDGSVLSVEGFQPTEAQPRGFNIDNSGKYLIAAGQKSHHIAVYEITGTQGLLTEKGRYAVGQGPMWVVVNAY.

The protein belongs to the cycloisomerase 2 family.

It catalyses the reaction 6-phospho-D-glucono-1,5-lactone + H2O = 6-phospho-D-gluconate + H(+). Its pathway is carbohydrate degradation; pentose phosphate pathway; D-ribulose 5-phosphate from D-glucose 6-phosphate (oxidative stage): step 2/3. Functionally, catalyzes the hydrolysis of 6-phosphogluconolactone to 6-phosphogluconate. This chain is 6-phosphogluconolactonase, found in Salmonella agona (strain SL483).